The following is a 370-amino-acid chain: Histidinol-phosphate aminotransferase 3 (370 aa).

An N6-(pyridoxal phosphate)lysine modification is found at K229.

This sequence belongs to the class-II pyridoxal-phosphate-dependent aminotransferase family. Histidinol-phosphate aminotransferase subfamily. As to quaternary structure, homodimer. Requires pyridoxal 5'-phosphate as cofactor.

The enzyme catalyses L-histidinol phosphate + 2-oxoglutarate = 3-(imidazol-4-yl)-2-oxopropyl phosphate + L-glutamate. It participates in amino-acid biosynthesis; L-histidine biosynthesis; L-histidine from 5-phospho-alpha-D-ribose 1-diphosphate: step 7/9. The polypeptide is Histidinol-phosphate aminotransferase 3 (hisC3) (Rhizobium meliloti (strain 1021) (Ensifer meliloti)).